The sequence spans 186 residues: Ran guanine nucleotide release factor (186 aa).

An interaction with RAN region spans residues 27–70 (DLRPVPDHQEVFCHRVTDQSLIVELLELQAHVQGEEAARYHFED).

Belongs to the MOG1 family. Monomer. Interacts with RAN, both RAN-GTP and RAN-GDP. Competes with RCC1 for a common binding site on RAN and thereby inhibits RCC1-mediated nucleotide exchange. Forms a complex with RAN-GTP and RANBP1. Interacts with the cytoplasmic loop 2 of SCN5A.

It is found in the nucleus. The protein resides in the cytoplasm. The protein localises to the perinuclear region. Its subcellular location is the cell membrane. In terms of biological role, may regulate the intracellular trafficking of RAN. Promotes guanine nucleotide release from RAN and inhibits binding of new GTP by preventing the binding of the RAN guanine nucleotide exchange factor RCC1. Regulates the levels of GTP-bound RAN in the nucleus, and thereby plays a role in the regulation of RAN-dependent mitotic spindle dynamics. Enhances the expression of SCN5A at the cell membrane in cardiomyocytes. The sequence is that of Ran guanine nucleotide release factor (RANGRF) from Bos taurus (Bovine).